The following is a 30-amino-acid chain: U5-ctenitoxin-Pk1b (30 aa).

2 disulfide bridges follow: Cys-6–Cys-23 and Cys-13–Cys-29.

It belongs to the neurotoxin 04 (omega-agtx) family. 02 (Tx1) subfamily. In terms of tissue distribution, expressed by the venom gland.

It localises to the secreted. Functionally, lethal neurotoxin. Causes spastic paralysis and death in mice in 4-6 minutes after intracerebroventricular injection at dose levels of 1.5 ug per mouse. The chain is U5-ctenitoxin-Pk1b from Phoneutria keyserlingi (Brazilian wandering spider).